The following is a 242-amino-acid chain: Venom nerve growth factor 3 (242 aa).

The first 18 residues, 1 to 18 (MSMLCYTLIIAFLIGIWA), serve as a signal peptide directing secretion. Residues 19–125 (APKSEDNVPL…ALNRNIRSKR (107 aa)) constitute a propeptide that is removed on maturation. The span at 48 to 66 (LKTSRNTDQRHPAPKKAED) shows a compositional bias: basic and acidic residues. The tract at residues 48–69 (LKTSRNTDQRHPAPKKAEDQEL) is disordered. 3 cysteine pairs are disulfide-bonded: Cys-139/Cys-203, Cys-181/Cys-231, and Cys-191/Cys-233. N-linked (GlcNAc...) asparagine glycosylation is present at Asn-147.

Belongs to the NGF-beta family. As to quaternary structure, homodimer; non-covalently linked. Expressed by the venom gland.

It is found in the secreted. Its function is as follows. Nerve growth factor is important for the development and maintenance of the sympathetic and sensory nervous systems. It stimulates division and differentiation of sympathetic and embryonic sensory neurons as well as basal forebrain cholinergic neurons in the brain. Its relevance in the snake venom is not clear. However, it has been shown to inhibit metalloproteinase-dependent proteolysis of platelet glycoprotein Ib alpha, suggesting a metalloproteinase inhibition to prevent metalloprotease autodigestion and/or protection against prey proteases. Binds a lipid between the two protein chains in the homodimer. The lipid-bound form promotes histamine relase from mouse mast cells, contrary to the lipid-free form. The protein is Venom nerve growth factor 3 of Demansia vestigiata (Lesser black whip snake).